We begin with the raw amino-acid sequence, 93 residues long: Integration host factor subunit beta (93 aa).

Belongs to the bacterial histone-like protein family. Heterodimer of an alpha and a beta chain.

Its function is as follows. This protein is one of the two subunits of integration host factor, a specific DNA-binding protein that functions in genetic recombination as well as in transcriptional and translational control. This chain is Integration host factor subunit beta, found in Glaesserella parasuis serovar 5 (strain SH0165) (Haemophilus parasuis).